Consider the following 66-residue polypeptide: Large ribosomal subunit protein bL33c (66 aa).

Belongs to the bacterial ribosomal protein bL33 family.

Its subcellular location is the plastid. The protein resides in the chloroplast. The chain is Large ribosomal subunit protein bL33c from Brachypodium distachyon (Purple false brome).